The sequence spans 220 residues: Botcinic acid biosynthesis cluster B protein 12 (220 aa).

It participates in polyketide biosynthesis. Its function is as follows. Part of the gene cluster B that mediates the biosynthesis of botcinic acid and its botcinin derivatives, acetate-derived polyketides that contribute to virulence when combined with the sesquiterpene botrydial. Botcinic acid and its derivatives have been shown to induce chlorosis and necrosis during host plant infection, but also have antifungal activities. Two polyketide synthases, BOA6 and BOA9, are involved in the biosynthesis of botcinins. BOA6 mediates the formation of the per-methylated tetraketide core by condensation of four units of malonyl-CoA with one unit of acetyl-CoA, which would be methylated in activated methylene groups to yield a bicyclic acid intermediate that could then either be converted to botrylactone derivatives or lose the starter acetate unit through a retro-Claisen type C-C bond cleavage to yield botcinin derivatives. The second polyketide synthase, BOA9, is probably required for the biosynthesis of the tetraketide side chain of botcinins. The methyltransferase (MT) domain within BOA6 is probably responsible for the incorporation of four methyl groups. The trans-enoyl reductase BOA5 might take over the enoyl reductase function of BOA6 that misses an ER domain. The monooxygenases BOA2, BOA3 and BOA4 might be involved in further hydroxylations at C4, C5 and C8, whereas BOA7, close to BOA9, could potentially be involved in the hydroxylation at C4 in the side chain of botcinins. The protein is Botcinic acid biosynthesis cluster B protein 12 of Botryotinia fuckeliana (strain B05.10) (Noble rot fungus).